A 145-amino-acid chain; its full sequence is Ecdysteroid-regulated 16 kDa protein (145 aa).

The N-terminal stretch at Met1–Ala16 is a signal peptide. Disulfide bonds link Cys22–Cys137 and Cys90–Cys97. An N-linked (GlcNAc...) asparagine glycan is attached at Asn51.

The protein belongs to the NPC2 family.

The protein localises to the secreted. This chain is Ecdysteroid-regulated 16 kDa protein (ESR16), found in Manduca sexta (Tobacco hawkmoth).